Here is a 408-residue protein sequence, read N- to C-terminus: BTB/POZ and MATH domain-containing protein 3 (408 aa).

The MATH domain occupies N24–V158. One can recognise a BTB domain in the interval C194 to H261.

The protein belongs to the Tdpoz family. As to quaternary structure, homodimer or heterodimer with BPM3 and BPM5. Interacts with CUL3A and CUL3B. Interacts with RAP2-4 and RAP2-13. Binds to MYB56 at the promoter of FLOWERING LOCUS T (FT). In terms of tissue distribution, ubiquitous.

It localises to the nucleus. The protein resides in the cytoplasm. It participates in protein modification; protein ubiquitination. In terms of biological role, may act as a substrate-specific adapter of an E3 ubiquitin-protein ligase complex (CUL3-RBX1-BTB) which mediates the ubiquitination and subsequent proteasomal degradation of target proteins. This chain is BTB/POZ and MATH domain-containing protein 3, found in Arabidopsis thaliana (Mouse-ear cress).